A 58-amino-acid polypeptide reads, in one-letter code: Large ribosomal subunit protein bL32 (58 aa).

Positions 1-15 (MAVPKKKTSKAKRNQ) are enriched in basic residues. Residues 1–23 (MAVPKKKTSKAKRNQRSATWKGK) are disordered.

This sequence belongs to the bacterial ribosomal protein bL32 family.

This chain is Large ribosomal subunit protein bL32, found in Synechococcus sp. (strain CC9902).